The sequence spans 717 residues: Polyribonucleotide nucleotidyltransferase (717 aa).

Residues Asp-496 and Asp-502 each contribute to the Mg(2+) site. In terms of domain architecture, KH spans 563–622 (PRLLTIKIDPDLIGLVIGPGGKTVKGITEQTGTKIDIDDDGTVTISSTDGEQAEKAKRLI). The region spanning 632–700 (GEVYLGRVTR…SKGRLNLTRL (69 aa)) is the S1 motif domain.

This sequence belongs to the polyribonucleotide nucleotidyltransferase family. It depends on Mg(2+) as a cofactor.

It localises to the cytoplasm. The enzyme catalyses RNA(n+1) + phosphate = RNA(n) + a ribonucleoside 5'-diphosphate. Its function is as follows. Involved in mRNA degradation. Catalyzes the phosphorolysis of single-stranded polyribonucleotides processively in the 3'- to 5'-direction. This chain is Polyribonucleotide nucleotidyltransferase, found in Microcystis aeruginosa (strain NIES-843 / IAM M-2473).